Consider the following 346-residue polypeptide: 36.4 kDa proline-rich protein (346 aa).

Residues 11 to 144 (PYPPSTPKHP…PFTPKPPSPI (134 aa)) are disordered. 3 stretches are compositionally biased toward pro residues: residues 25–42 (KVKP…PSTP), 51–81 (VKPP…PSTP), and 89–144 (QKPC…PSPI).

This chain is 36.4 kDa proline-rich protein (TPRP-F1), found in Solanum lycopersicum (Tomato).